The sequence spans 405 residues: Na(+)/H(+) antiporter NhaA 1 (405 aa).

11 helical membrane passes run 20–40 (FVSD…AMIV), 68–88 (LHLW…GLEV), 105–125 (LPVL…VGVV), 134–154 (GWAI…GLLG), 163–183 (LFLL…IAAF), 186–206 (ANLK…MVGM), 214–234 (IWPY…SGVH), 263–283 (GLAP…NAGV), 301–321 (IAAG…VAAV), 334–354 (WIEI…SLFI), and 371–391 (IGIL…LRLT).

The protein belongs to the NhaA Na(+)/H(+) (TC 2.A.33) antiporter family.

It is found in the cell inner membrane. The enzyme catalyses Na(+)(in) + 2 H(+)(out) = Na(+)(out) + 2 H(+)(in). In terms of biological role, na(+)/H(+) antiporter that extrudes sodium in exchange for external protons. The chain is Na(+)/H(+) antiporter NhaA 1 from Erythrobacter litoralis (strain HTCC2594).